Consider the following 126-residue polypeptide: MYSSLLSIACGAVLGAWLRWFVGLKFNSTFQNFPLGTILVNLVGGFIIGFAIALFANMQLSSNYKLFVITGFCGALTTFSTFSAEVIDLLQQQKYGFAIALITIHLMGSLLCTVLGLLSYQWLSQH.

A run of 4 helical transmembrane segments spans residues 4–24, 35–55, 67–87, and 97–117; these read SLLS…FVGL, LGTI…IALF, FVIT…AEVI, and FAIA…VLGL. Residues Gly74 and Thr77 each contribute to the Na(+) site.

Belongs to the fluoride channel Fluc/FEX (TC 1.A.43) family.

The protein localises to the cell inner membrane. It carries out the reaction fluoride(in) = fluoride(out). With respect to regulation, na(+) is not transported, but it plays an essential structural role and its presence is essential for fluoride channel function. In terms of biological role, fluoride-specific ion channel. Important for reducing fluoride concentration in the cell, thus reducing its toxicity. This chain is Fluoride-specific ion channel FluC, found in Acinetobacter baylyi (strain ATCC 33305 / BD413 / ADP1).